A 99-amino-acid polypeptide reads, in one-letter code: Aspartyl/glutamyl-tRNA(Asn/Gln) amidotransferase subunit C (99 aa).

It belongs to the GatC family. As to quaternary structure, heterotrimer of A, B and C subunits.

It catalyses the reaction L-glutamyl-tRNA(Gln) + L-glutamine + ATP + H2O = L-glutaminyl-tRNA(Gln) + L-glutamate + ADP + phosphate + H(+). The enzyme catalyses L-aspartyl-tRNA(Asn) + L-glutamine + ATP + H2O = L-asparaginyl-tRNA(Asn) + L-glutamate + ADP + phosphate + 2 H(+). Functionally, allows the formation of correctly charged Asn-tRNA(Asn) or Gln-tRNA(Gln) through the transamidation of misacylated Asp-tRNA(Asn) or Glu-tRNA(Gln) in organisms which lack either or both of asparaginyl-tRNA or glutaminyl-tRNA synthetases. The reaction takes place in the presence of glutamine and ATP through an activated phospho-Asp-tRNA(Asn) or phospho-Glu-tRNA(Gln). This is Aspartyl/glutamyl-tRNA(Asn/Gln) amidotransferase subunit C from Leptothrix cholodnii (strain ATCC 51168 / LMG 8142 / SP-6) (Leptothrix discophora (strain SP-6)).